Reading from the N-terminus, the 570-residue chain is MAGGAREVLTLQLGHFAGFVGAHWWNQQDAALGRATDSKEPPGELCPDVLYRTGRTLHGQETYTPRLILMDLKGSLSSLKEEGGLYRDKQLDAAIAWQGKLTTHKEELYPKNPYLQDFLSAEGVLSSDGVWRVKSIPNGKGSSPLPTATTPKPLIPTEASIRVWSDFLRVHLHPRSICMIQKYNHDGEAGRLEAFGQGESVLKEPKYQEELEDRLHFYVEECDYLQGFQILCDLHDGFSGVGAKAAELLQDEYSGRGIITWGLLPGPYHRGEAQRNIYRLLNTAFGLVHLTAHSSLVCPLSLGGSLGLRPEPPVSFPYLHYDATLPFHCSAILATALDTVTVPYRLCSSPVSMVHLADMLSFCGKKVVTAGAIIPFPLAPGQSLPDSLMQFGGATPWTPLSACGEPSGTRCFAQSVVLRGIDRACHTSQLTPGTPPPSALHACTTGEEILAQYLQQQQPGVMSSSHLLLTPCRVAPPYPHLFSSCSPPGMVLDGSPKGAAVESIPVFGALCSSSSLHQTLEALARDLTKLDLRRWASFMDAGVEHDDVAELLQELQSLAQCYQGGDSLVD.

S495 bears the Phosphoserine mark.

This sequence belongs to the misato family. In terms of tissue distribution, present in all cell lines tested (at protein level). Widely expressed.

It is found in the mitochondrion outer membrane. The protein resides in the cytoplasm. Involved in the regulation of mitochondrial distribution and morphology. Required for mitochondrial fusion and mitochondrial network formation. This Homo sapiens (Human) protein is Protein misato homolog 1 (MSTO1).